A 303-amino-acid chain; its full sequence is ATP phosphoribosyltransferase (303 aa).

It belongs to the ATP phosphoribosyltransferase family. Long subfamily. Mg(2+) is required as a cofactor.

The protein resides in the cytoplasm. The enzyme catalyses 1-(5-phospho-beta-D-ribosyl)-ATP + diphosphate = 5-phospho-alpha-D-ribose 1-diphosphate + ATP. Its pathway is amino-acid biosynthesis; L-histidine biosynthesis; L-histidine from 5-phospho-alpha-D-ribose 1-diphosphate: step 1/9. Its activity is regulated as follows. Feedback inhibited by histidine. In terms of biological role, catalyzes the condensation of ATP and 5-phosphoribose 1-diphosphate to form N'-(5'-phosphoribosyl)-ATP (PR-ATP). Has a crucial role in the pathway because the rate of histidine biosynthesis seems to be controlled primarily by regulation of HisG enzymatic activity. This Stenotrophomonas maltophilia (strain R551-3) protein is ATP phosphoribosyltransferase.